Reading from the N-terminus, the 632-residue chain is Threonine--tRNA ligase (632 aa).

In terms of domain architecture, TGS spans Met1–Gln59. The tract at residues Asp240–Pro532 is catalytic. Positions 332, 383, and 509 each coordinate Zn(2+).

It belongs to the class-II aminoacyl-tRNA synthetase family. In terms of assembly, homodimer. The cofactor is Zn(2+).

Its subcellular location is the cytoplasm. The enzyme catalyses tRNA(Thr) + L-threonine + ATP = L-threonyl-tRNA(Thr) + AMP + diphosphate + H(+). Its function is as follows. Catalyzes the attachment of threonine to tRNA(Thr) in a two-step reaction: L-threonine is first activated by ATP to form Thr-AMP and then transferred to the acceptor end of tRNA(Thr). Also edits incorrectly charged L-seryl-tRNA(Thr). The polypeptide is Threonine--tRNA ligase (Wolbachia sp. subsp. Brugia malayi (strain TRS)).